The primary structure comprises 491 residues: GTPase Der (491 aa).

Residues 3–178 enclose the EngA-type G 1 domain; sequence AKIALVGRPN…EMRDLLPEED (176 aa). Residues 9–16, 57–61, and 130–133 contribute to the GTP site; these read GRPNVGKS, DTGGI, and NKVD. Positions 198–224 are enriched in acidic residues; it reads DAETEDGASASETEEDITEETVEDEPE. Residues 198–225 are disordered; it reads DAETEDGASASETEEDITEETVEDEPEA. One can recognise an EngA-type G 2 domain in the interval 227 to 400; the sequence is LRLCMLGRPN…LAARIRRECS (174 aa). GTP contacts are provided by residues 233–240, 280–284, and 345–348; these read GRPNAGKS, DTAGV, and NKMD. In terms of domain architecture, KH-like spans 401–485; the sequence is VRIPTGQLNR…PMRVHFRSSH (85 aa).

This sequence belongs to the TRAFAC class TrmE-Era-EngA-EngB-Septin-like GTPase superfamily. EngA (Der) GTPase family. Associates with the 50S ribosomal subunit.

In terms of biological role, GTPase that plays an essential role in the late steps of ribosome biogenesis. The polypeptide is GTPase Der (Nitratidesulfovibrio vulgaris (strain ATCC 29579 / DSM 644 / CCUG 34227 / NCIMB 8303 / VKM B-1760 / Hildenborough) (Desulfovibrio vulgaris)).